Consider the following 319-residue polypeptide: Beta-ketoacyl-[acyl-carrier-protein] synthase III (319 aa).

Catalysis depends on residues Cys-113 and His-246. The tract at residues 247–251 (QANRR) is ACP-binding. The active site involves Asn-276.

It belongs to the thiolase-like superfamily. FabH family. As to quaternary structure, homodimer.

It is found in the cytoplasm. The enzyme catalyses malonyl-[ACP] + acetyl-CoA + H(+) = 3-oxobutanoyl-[ACP] + CO2 + CoA. It functions in the pathway lipid metabolism; fatty acid biosynthesis. Functionally, catalyzes the condensation reaction of fatty acid synthesis by the addition to an acyl acceptor of two carbons from malonyl-ACP. Catalyzes the first condensation reaction which initiates fatty acid synthesis and may therefore play a role in governing the total rate of fatty acid production. Possesses both acetoacetyl-ACP synthase and acetyl transacylase activities. Its substrate specificity determines the biosynthesis of branched-chain and/or straight-chain of fatty acids. The chain is Beta-ketoacyl-[acyl-carrier-protein] synthase III from Rhizorhabdus wittichii (strain DSM 6014 / CCUG 31198 / JCM 15750 / NBRC 105917 / EY 4224 / RW1) (Sphingomonas wittichii).